The sequence spans 194 residues: CASP-like protein 2C1 (194 aa).

Over 1 to 18 (MSSYMEAAAAARAAEAKT) the chain is Cytoplasmic. A helical membrane pass occupies residues 19 to 39 (EGLLRGACALLAAAAALLVGL). The Extracellular portion of the chain corresponds to 40 to 59 (NTQTETVLFIRKKATVKDVQ). A helical transmembrane segment spans residues 60–80 (ALWVLAMAAAAAAGYHLLQLL). Topologically, residues 81–109 (RCFYLSRFADGKPCRHRRAIAWLCFLLDK) are cytoplasmic. Residues 110–130 (GCAYITFATTVAAAQACVVAL) form a helical membrane-spanning segment. Over 131–151 (YGTHALQWTKLCNIYTRFCEQ) the chain is Extracellular. The chain crosses the membrane as a helical span at residues 152 to 172 (VAGSLVCAMLAAVGTALLSVV). Residues 173–194 (SARNLFRLYPSMLSPPPSSFVG) lie on the Cytoplasmic side of the membrane.

This sequence belongs to the Casparian strip membrane proteins (CASP) family. Homodimer and heterodimers.

The protein resides in the cell membrane. This chain is CASP-like protein 2C1, found in Oryza sativa subsp. japonica (Rice).